The sequence spans 278 residues: Large ribosomal subunit protein uL2 (278 aa).

2 disordered regions span residues 26-57 (RSTP…QGGG) and 225-278 (VMNP…NKKR). Basic residues predominate over residues 258–278 (RSPKKASNKYIVRRRKTNKKR).

The protein belongs to the universal ribosomal protein uL2 family. In terms of assembly, part of the 50S ribosomal subunit. Forms a bridge to the 30S subunit in the 70S ribosome.

Functionally, one of the primary rRNA binding proteins. Required for association of the 30S and 50S subunits to form the 70S ribosome, for tRNA binding and peptide bond formation. It has been suggested to have peptidyltransferase activity; this is somewhat controversial. Makes several contacts with the 16S rRNA in the 70S ribosome. This chain is Large ribosomal subunit protein uL2, found in Streptomyces coelicolor (strain ATCC BAA-471 / A3(2) / M145).